A 122-amino-acid polypeptide reads, in one-letter code: Small ribosomal subunit protein uS12 (122 aa).

This sequence belongs to the universal ribosomal protein uS12 family. Part of the 30S ribosomal subunit. Contacts proteins S8 and S17. May interact with IF1 in the 30S initiation complex.

Functionally, with S4 and S5 plays an important role in translational accuracy. Its function is as follows. Interacts with and stabilizes bases of the 16S rRNA that are involved in tRNA selection in the A site and with the mRNA backbone. Located at the interface of the 30S and 50S subunits, it traverses the body of the 30S subunit contacting proteins on the other side and probably holding the rRNA structure together. The combined cluster of proteins S8, S12 and S17 appears to hold together the shoulder and platform of the 30S subunit. This chain is Small ribosomal subunit protein uS12, found in Corynebacterium efficiens (strain DSM 44549 / YS-314 / AJ 12310 / JCM 11189 / NBRC 100395).